The following is a 32-amino-acid chain: Photosystem II reaction center protein T (32 aa).

A helical membrane pass occupies residues 3–23; it reads TLVYTFLLIGTLAVLFAAVFF.

Belongs to the PsbT family. PSII is composed of 1 copy each of membrane proteins PsbA, PsbB, PsbC, PsbD, PsbE, PsbF, PsbH, PsbI, PsbJ, PsbK, PsbL, PsbM, PsbT, PsbX, PsbY, PsbZ, Psb30/Ycf12, at least 3 peripheral proteins of the oxygen-evolving complex and a large number of cofactors. It forms dimeric complexes.

Its subcellular location is the plastid. It is found in the chloroplast thylakoid membrane. Functionally, found at the monomer-monomer interface of the photosystem II (PS II) dimer, plays a role in assembly and dimerization of PSII. PSII is a light-driven water plastoquinone oxidoreductase, using light energy to abstract electrons from H(2)O, generating a proton gradient subsequently used for ATP formation. In Guillardia theta (Cryptophyte), this protein is Photosystem II reaction center protein T.